A 231-amino-acid polypeptide reads, in one-letter code: 5'-methylthioadenosine/S-adenosylhomocysteine nucleosidase (231 aa).

The active-site Proton acceptor is the Glu-12. Substrate contacts are provided by residues Gly-78, Met-153, and 174-175 (ME). Asp-198 functions as the Proton donor in the catalytic mechanism.

It belongs to the PNP/UDP phosphorylase family. MtnN subfamily.

It carries out the reaction S-adenosyl-L-homocysteine + H2O = S-(5-deoxy-D-ribos-5-yl)-L-homocysteine + adenine. The enzyme catalyses S-methyl-5'-thioadenosine + H2O = 5-(methylsulfanyl)-D-ribose + adenine. The catalysed reaction is 5'-deoxyadenosine + H2O = 5-deoxy-D-ribose + adenine. It participates in amino-acid biosynthesis; L-methionine biosynthesis via salvage pathway; S-methyl-5-thio-alpha-D-ribose 1-phosphate from S-methyl-5'-thioadenosine (hydrolase route): step 1/2. Its function is as follows. Catalyzes the irreversible cleavage of the glycosidic bond in both 5'-methylthioadenosine (MTA) and S-adenosylhomocysteine (SAH/AdoHcy) to adenine and the corresponding thioribose, 5'-methylthioribose and S-ribosylhomocysteine, respectively. Also cleaves 5'-deoxyadenosine, a toxic by-product of radical S-adenosylmethionine (SAM) enzymes, into 5-deoxyribose and adenine. This is 5'-methylthioadenosine/S-adenosylhomocysteine nucleosidase from Bacillus velezensis (strain DSM 23117 / BGSC 10A6 / LMG 26770 / FZB42) (Bacillus amyloliquefaciens subsp. plantarum).